The chain runs to 869 residues: MTDTPAERPDPGVAGDADWAAQARPLLVHADMRLCKRFDQGEPIERLVALRARAVDQLMRNAWMRCIPADSGLSLHAVGGYGRGELFPRSDVDVLVLGDTAAQQQHEQALARLFALLWDVGLPISHAVRSPAQCTAAAADQTVLTALIESRALVADGQARAALATAIAPPQVWPPRDFFQAKREELLARHQRFGDTADNLEPDIKDGPGGLRDLQTLGWMALRAFGVKDLEALVGLGHVGFDEAAALRREREELARLRFGLHIVANRPEERLRFDYQKTLAERLGFADDPESLGVEKMMQRFYRSAALIRRISDRLLQRFEEQFDGEATPEPLGGGFSLRRGYLAADAESWPDGDVLQVFALFAQWAAHREVRGLHSLTARALAEVLRDLPAYDIADATARERFMALLRGPRAVETLNRMARLGVLGQWIPAFASVSGRMQFDLFHVYTVDQHTLMVLRNIALFAAGRADERFSIAHEVWPRLRKPELLLLAGLFHDIAKGRGGDHSELGAVDARAFCLAHRLSEGDTELVTWLVEQHLRMSVTAQKQDISDPEVIHRFATLVGTRERLDYLYLLTCADIAGTSPKLWNAWKDRLLADLYFAARRALREGLEHPPPREERLREARESARTLMQAQGHDDVTIDRQFAGMPDENFLRFRPEQLAWQAASLIEVEIGQTLVKARRAVPDNDALEVFVYSPDRDGLFAAIVATLDRKGYGIHRARVLDAPHDAIFDVFEVLPQETYADGDPQRLAATLRQVLAGDLHKVRPARRAVPRQLRHFRFAPRVEFSESAGGRRTRISLVAPDRPGLLADVAHVLRMQHLRVHDARIATFGERAEDQFQITDEHDRPLSESARQALRDALCACLDPV.

Residues 1 to 332 (MTDTPAERPD…QFDGEATPEP (332 aa)) are uridylyltransferase. The tract at residues 333–691 (LGGGFSLRRG…RRAVPDNDAL (359 aa)) is uridylyl-removing. Residues 450 to 572 (VDQHTLMVLR…VGTRERLDYL (123 aa)) form the HD domain. 2 ACT domains span residues 692 to 774 (EVFV…RAVP) and 798 to 869 (RISL…LDPV).

This sequence belongs to the GlnD family. The cofactor is Mg(2+).

The enzyme catalyses [protein-PII]-L-tyrosine + UTP = [protein-PII]-uridylyl-L-tyrosine + diphosphate. It catalyses the reaction [protein-PII]-uridylyl-L-tyrosine + H2O = [protein-PII]-L-tyrosine + UMP + H(+). Its activity is regulated as follows. Uridylyltransferase (UTase) activity is inhibited by glutamine, while glutamine activates uridylyl-removing (UR) activity. Its function is as follows. Modifies, by uridylylation and deuridylylation, the PII regulatory proteins (GlnB and homologs), in response to the nitrogen status of the cell that GlnD senses through the glutamine level. Under low glutamine levels, catalyzes the conversion of the PII proteins and UTP to PII-UMP and PPi, while under higher glutamine levels, GlnD hydrolyzes PII-UMP to PII and UMP (deuridylylation). Thus, controls uridylylation state and activity of the PII proteins, and plays an important role in the regulation of nitrogen assimilation and metabolism. The sequence is that of Bifunctional uridylyltransferase/uridylyl-removing enzyme from Xanthomonas euvesicatoria pv. vesicatoria (strain 85-10) (Xanthomonas campestris pv. vesicatoria).